A 347-amino-acid polypeptide reads, in one-letter code: Probable zinc transporter 8 (347 aa).

A signal peptide spans 1–27; the sequence is MATTTQHMNQIFLVLLLISFAISPAIS. Over 28 to 51 the chain is Extracellular; sequence TVPKECETDSTDSCIDKTKALPLK. The chain crosses the membrane as a helical span at residues 52 to 72; sequence IVAIVAILVTSMIGVAAPLFS. The Cytoplasmic portion of the chain corresponds to 73-83; the sequence is RYVTFLHPDGK. A helical transmembrane segment spans residues 84–104; the sequence is IFMIIKCFASGIILGTGFMHV. The Extracellular segment spans residues 105 to 124; the sequence is LPDSFEMLSSPCLEDNPWHK. The helical transmembrane segment at 125–145 threads the bilayer; sequence FPFTGFVAMLSGLVTLAIDSI. Topologically, residues 146 to 192 are cytoplasmic; sequence ATSLYTKKAVADDSEERTTPMIIQIDHLPLTTKERSSTCSKQLLRYR. Residues 193 to 213 form a helical membrane-spanning segment; it reads VIATVLELGIIVHSVVIGLSL. Residues 214-224 lie on the Extracellular side of the membrane; sequence GATNDTCTIKG. The helical transmembrane segment at 225-245 threads the bilayer; sequence LIAALCFHQMFEGMGLGGCIL. Over 246-254 the chain is Cytoplasmic; sequence QAEYTNVKK. The helical transmembrane segment at 255-275 threads the bilayer; it reads FVMAFFFAVTTPSGIALGIAL. Topologically, residues 276–286 are extracellular; the sequence is SSVYKDNSPTA. The chain crosses the membrane as a helical span at residues 287 to 307; the sequence is LITVGLLNACSAGLLIYMALV. Residues 308 to 326 are Cytoplasmic-facing; it reads DLLAAEFMGSMLQRSVKLQ. A helical membrane pass occupies residues 327–347; that stretch reads LNCFGAALLGCGGMSVLAKWA.

It belongs to the ZIP transporter (TC 2.A.5) family.

It is found in the cell membrane. Functionally, probably mediates zinc uptake from the rhizosphere. The sequence is that of Probable zinc transporter 8 (ZIP8) from Arabidopsis thaliana (Mouse-ear cress).